We begin with the raw amino-acid sequence, 266 residues long: Glucosamine-6-phosphate deaminase (266 aa).

Aspartate 72 acts as the Proton acceptor; for enolization step in catalysis. Catalysis depends on aspartate 141, which acts as the For ring-opening step. Residue histidine 143 is the Proton acceptor; for ring-opening step of the active site. Residue glutamate 148 is the For ring-opening step of the active site.

Belongs to the glucosamine/galactosamine-6-phosphate isomerase family. NagB subfamily. Homohexamer.

The enzyme catalyses alpha-D-glucosamine 6-phosphate + H2O = beta-D-fructose 6-phosphate + NH4(+). Its pathway is amino-sugar metabolism; N-acetylneuraminate degradation; D-fructose 6-phosphate from N-acetylneuraminate: step 5/5. Allosterically activated by N-acetylglucosamine 6-phosphate (GlcNAc6P). Catalyzes the reversible isomerization-deamination of glucosamine 6-phosphate (GlcN6P) to form fructose 6-phosphate (Fru6P) and ammonium ion. This is Glucosamine-6-phosphate deaminase from Edwardsiella ictaluri (strain 93-146).